A 187-amino-acid chain; its full sequence is Ribosome-recycling factor (187 aa).

This sequence belongs to the RRF family.

Its subcellular location is the cytoplasm. In terms of biological role, responsible for the release of ribosomes from messenger RNA at the termination of protein biosynthesis. May increase the efficiency of translation by recycling ribosomes from one round of translation to another. This is Ribosome-recycling factor from Parvibaculum lavamentivorans (strain DS-1 / DSM 13023 / NCIMB 13966).